The primary structure comprises 404 residues: DNA gyrase subunit B (404 aa).

In terms of domain architecture, Toprim spans 321 to 404 (SEIYIVEGDS…VIIMTDADVD (84 aa)). Mg(2+)-binding residues include E327, D400, and D402.

Belongs to the type II topoisomerase GyrB family. In terms of assembly, heterotetramer, composed of two GyrA and two GyrB chains. In the heterotetramer, GyrA contains the active site tyrosine that forms a transient covalent intermediate with DNA, while GyrB binds cofactors and catalyzes ATP hydrolysis. Requires Mg(2+) as cofactor. It depends on Mn(2+) as a cofactor. The cofactor is Ca(2+).

The protein localises to the cytoplasm. It catalyses the reaction ATP-dependent breakage, passage and rejoining of double-stranded DNA.. Functionally, a type II topoisomerase that negatively supercoils closed circular double-stranded (ds) DNA in an ATP-dependent manner to modulate DNA topology and maintain chromosomes in an underwound state. Negative supercoiling favors strand separation, and DNA replication, transcription, recombination and repair, all of which involve strand separation. Also able to catalyze the interconversion of other topological isomers of dsDNA rings, including catenanes and knotted rings. Type II topoisomerases break and join 2 DNA strands simultaneously in an ATP-dependent manner. The sequence is that of DNA gyrase subunit B (gyrB) from Bacillus cereus.